The following is a 371-amino-acid chain: tRNA (guanine(26)-N(2))-dimethyltransferase (371 aa).

The Trm1 methyltransferase domain occupies 4–368 (IEVTEGRTTF…APLDAIAAAL (365 aa)). Arg41, Arg66, Asp82, Asp108, and Ala109 together coordinate S-adenosyl-L-methionine. Zn(2+)-binding residues include Cys237, Cys240, Cys256, and Cys259.

This sequence belongs to the class I-like SAM-binding methyltransferase superfamily. Trm1 family.

It carries out the reaction guanosine(26) in tRNA + 2 S-adenosyl-L-methionine = N(2)-dimethylguanosine(26) in tRNA + 2 S-adenosyl-L-homocysteine + 2 H(+). Functionally, dimethylates a single guanine residue at position 26 of a number of tRNAs using S-adenosyl-L-methionine as donor of the methyl groups. This Methanosphaerula palustris (strain ATCC BAA-1556 / DSM 19958 / E1-9c) protein is tRNA (guanine(26)-N(2))-dimethyltransferase.